The following is a 472-amino-acid chain: MPNSEPCVSPLELFNSIATQGELVRSLKAGNASKDEIDSAVKMLLSLKMSYKAAMGEDYKANCPPGNPAPTSNHGPDATEAEEDFVDPWTVQTSSAKGIDYDKLIVRFGSSKIDKELINRIERATGQRPHRFLRRGIFFSHRDMNQVLDAYENKKPFYLYTGRGPSSEAMHVGHLIPFIFTKWLQDVFNVPLVIQMTDDEKYLWKDLTLDQAYSYAVENAKDIIACGFDINKTFIFSDLDYMGMSSGFYKNVVKIQKHVTFNQVKGIFGFTDSDCIGKISFPAIQAAPSFSNSFPQIFRDRTDIQCLIPCAIDQDPYFRMTRDVAPRIGYPKPALLHSTFFPALQGAQTKMSASDPNSSIFLTDTAKQIKTKVNKHAFSGGRDTIEEHRQFGGNCDVDVSFMYLTFFLEDDDKLEQIRKDYTSGAMLTGELKKALIEVLQPLIAEHQARRKEVTDEIVKEFMTPRKLSFDFQ.

Residues 9–65 enclose the WHEP-TRS domain; the sequence is SPLELFNSIATQGELVRSLKAGNASKDEIDSAVKMLLSLKMSYKAAMGEDYKANCPP. Lys-155 is modified (N6-succinyllysine). The short motif at 165–174 is the 'HIGH' region element; sequence PSSEAMHVGH. The 'KMSKS' region motif lies at 350–354; sequence KMSAS. Phosphoserine is present on Ser-352.

It belongs to the class-I aminoacyl-tRNA synthetase family. As to quaternary structure, homodimer. Interacts with oxidized form of GAPDH. In terms of processing, proteolytic cleavage generates 2 forms; T1-TrpRS and T2-TrpRS.

It localises to the cytoplasm. It carries out the reaction tRNA(Trp) + L-tryptophan + ATP = L-tryptophyl-tRNA(Trp) + AMP + diphosphate + H(+). Functionally, catalyzes the attachment of tryptophan to tRNA(Trp) in a two-step reaction: tryptophan is first activated by ATP to form Trp-AMP and then transferred to the acceptor end of the tRNA(Trp). Could also possess an angiostatic activity. The chain is Tryptophan--tRNA ligase, cytoplasmic (WARS1) from Pongo abelii (Sumatran orangutan).